The following is a 350-amino-acid chain: 3'-hydroxy-N-methyl-(S)-coclaurine 4'-O-methyltransferase (350 aa).

Positions 196, 219, 239, 240, and 253 each coordinate S-adenosyl-L-methionine. The Proton acceptor role is filled by H257.

This sequence belongs to the class I-like SAM-binding methyltransferase superfamily. Cation-independent O-methyltransferase family. COMT subfamily. As to quaternary structure, homodimer.

It catalyses the reaction (S)-3'-hydroxy-N-methylcoclaurine + S-adenosyl-L-methionine = (S)-reticuline + S-adenosyl-L-homocysteine + H(+). Its pathway is alkaloid biosynthesis; (S)-reticuline biosynthesis; (S)-reticuline from (S)-norcoclaurine: step 4/4. In terms of biological role, catalyzes the transfer of the methyl group to the 4'-hydroxyl group of 3'-hydroxy-N-methylcoclaurine to form reticuline. This Coptis japonica (Japanese goldthread) protein is 3'-hydroxy-N-methyl-(S)-coclaurine 4'-O-methyltransferase.